Reading from the N-terminus, the 183-residue chain is Inner membrane-spanning protein YciB (183 aa).

5 helical membrane-spanning segments follow: residues 10 to 30, 50 to 70, 72 to 92, 118 to 138, and 148 to 168; these read LVIFFAVYKLFDIYAASGALI, MHLITFVMVTVFGTLTLVFHD, AFIKWKVTVVYALFAIALAVS, VTWYWVSFFITCALVNIYVAF, and FKVFGLTALTLVNTVITVIYL.

This sequence belongs to the YciB family.

The protein resides in the cell inner membrane. Functionally, plays a role in cell envelope biogenesis, maintenance of cell envelope integrity and membrane homeostasis. The chain is Inner membrane-spanning protein YciB from Shewanella sediminis (strain HAW-EB3).